Consider the following 344-residue polypeptide: Nicotinate-nucleotide--dimethylbenzimidazole phosphoribosyltransferase (344 aa).

Glu310 (proton acceptor) is an active-site residue.

This sequence belongs to the CobT family.

It catalyses the reaction 5,6-dimethylbenzimidazole + nicotinate beta-D-ribonucleotide = alpha-ribazole 5'-phosphate + nicotinate + H(+). The protein operates within nucleoside biosynthesis; alpha-ribazole biosynthesis; alpha-ribazole from 5,6-dimethylbenzimidazole: step 1/2. Catalyzes the synthesis of alpha-ribazole-5'-phosphate from nicotinate mononucleotide (NAMN) and 5,6-dimethylbenzimidazole (DMB). The polypeptide is Nicotinate-nucleotide--dimethylbenzimidazole phosphoribosyltransferase (Chromobacterium violaceum (strain ATCC 12472 / DSM 30191 / JCM 1249 / CCUG 213 / NBRC 12614 / NCIMB 9131 / NCTC 9757 / MK)).